Consider the following 679-residue polypeptide: Transketolase 10 (679 aa).

His40 contacts substrate. Residues His80 and 129–131 (GPL) contribute to the thiamine diphosphate site. Position 170 (Asp170) interacts with Mg(2+). The thiamine diphosphate site is built by Gly171 and Asn200. The Mg(2+) site is built by Asn200 and Ile202. Substrate contacts are provided by His277, Arg371, and Ser398. His277 lines the thiamine diphosphate pocket. Residues Glu425 and Phe452 each contribute to the thiamine diphosphate site. Glu425 serves as the catalytic Proton donor. 3 residues coordinate substrate: His476, Asp484, and Arg535.

It belongs to the transketolase family. Homodimer. Mg(2+) is required as a cofactor. It depends on Ca(2+) as a cofactor. Requires Mn(2+) as cofactor. The cofactor is Co(2+). Thiamine diphosphate serves as cofactor. Leaves.

The catalysed reaction is D-sedoheptulose 7-phosphate + D-glyceraldehyde 3-phosphate = aldehydo-D-ribose 5-phosphate + D-xylulose 5-phosphate. In terms of biological role, could be involved in the conversion of sugars, which are a major phenomenon in the rehydration process. Its function is as follows. Catalyzes the transfer of a two-carbon ketol group from a ketose donor to an aldose acceptor, via a covalent intermediate with the cofactor thiamine pyrophosphate. This is Transketolase 10 (TKT10) from Craterostigma plantagineum (Blue gem).